Here is an 84-residue protein sequence, read N- to C-terminus: MPRPAYRSRSLRRVKVKTPGGRTVVHYEKRAKGVPKCAVTGQPLGGMNSKVYRFGISTRAPSRPYGGVVSHKVLARAIRYAVRR.

Belongs to the eukaryotic ribosomal protein eL34 family.

This chain is Large ribosomal subunit protein eL34, found in Pyrobaculum calidifontis (strain DSM 21063 / JCM 11548 / VA1).